Here is a 133-residue protein sequence, read N- to C-terminus: Ribosome-binding factor A (133 aa).

This sequence belongs to the RbfA family. As to quaternary structure, monomer. Binds 30S ribosomal subunits, but not 50S ribosomal subunits or 70S ribosomes.

The protein resides in the cytoplasm. Functionally, one of several proteins that assist in the late maturation steps of the functional core of the 30S ribosomal subunit. Associates with free 30S ribosomal subunits (but not with 30S subunits that are part of 70S ribosomes or polysomes). Required for efficient processing of 16S rRNA. May interact with the 5'-terminal helix region of 16S rRNA. This is Ribosome-binding factor A from Cytophaga hutchinsonii (strain ATCC 33406 / DSM 1761 / CIP 103989 / NBRC 15051 / NCIMB 9469 / D465).